The primary structure comprises 103 residues: Urease subunit beta (103 aa).

The protein belongs to the urease beta subunit family. Heterotrimer of UreA (gamma), UreB (beta) and UreC (alpha) subunits. Three heterotrimers associate to form the active enzyme.

The protein localises to the cytoplasm. The enzyme catalyses urea + 2 H2O + H(+) = hydrogencarbonate + 2 NH4(+). The protein operates within nitrogen metabolism; urea degradation; CO(2) and NH(3) from urea (urease route): step 1/1. In terms of biological role, ureolysis may allow urea to be employed as a nitrogen source for growth and produces ammonia which may protect from killing at low pH. This is Urease subunit beta from Streptococcus salivarius (strain 57.I).